Consider the following 609-residue polypeptide: Ataxin-10 homolog (609 aa).

Disordered stretches follow at residues 265–293 (KSTT…TTTG), 405–426 (KQQE…SKDS), and 461–490 (SDTN…KGFN). A compositionally biased stretch (low complexity) spans 266–292 (STTESTTESTTTESTDSTTDSTTTTTT). The span at 466 to 479 (SSSSSSSSSSSTTT) shows a compositional bias: low complexity. The segment covering 480–490 (DGETVTSKGFN) has biased composition (polar residues).

The protein belongs to the ATXN10 family.

Functionally, may play a role in the regulation of cytokinesis. The protein is Ataxin-10 homolog (atxn10) of Dictyostelium discoideum (Social amoeba).